Consider the following 234-residue polypeptide: GTP-binding protein YPT52 (234 aa).

Residues 10 to 17 (GDSSVGKS), 66 to 70 (DTAGQ), and 111 to 114 (NKVG) each bind GTP. Disordered regions lie at residues 131-151 (QETPSTETSPDSNEGGDEEQK) and 206-234 (NRQIGGGNNGQVDINLQRPSTNDPTSCCS). Polar residues predominate over residues 132 to 142 (ETPSTETSPDS). Phosphoserine occurs at positions 139 and 142. A Glycyl lysine isopeptide (Lys-Gly) (interchain with G-Cter in ubiquitin) cross-link involves residue Lys151. A compositionally biased stretch (polar residues) spans 217-234 (VDINLQRPSTNDPTSCCS). S-geranylgeranyl cysteine attachment occurs at residues Cys232 and Cys233.

The protein belongs to the small GTPase superfamily. Rab family. Interacts with ROY1, YIF1, YIP3, YIP4 and YIP5.

Its subcellular location is the cell membrane. It localises to the endoplasmic reticulum. Its function is as follows. Required for transport in the endocytic pathway and for correct sorting of the vacuolar hydrolases suggesting a possible intersection of the endocytic with the vacuolar sorting pathway. May be involved in recruiting the MON1-CCZ1 complex to membranes enriched in phosphatidylinositol 3-phosphate (PtdIns[3]P) or other charged lipids, leading to recruitment of YPT7. The sequence is that of GTP-binding protein YPT52 (YPT52) from Saccharomyces cerevisiae (strain ATCC 204508 / S288c) (Baker's yeast).